Here is a 369-residue protein sequence, read N- to C-terminus: Ribosome-interacting GTPase 1 (369 aa).

Serine 2 bears the N-acetylserine mark. In terms of domain architecture, OBG-type G spans 66–292; sequence ASVGFVGFPS…LLQVMWDRLN (227 aa). GTP is bound by residues 72-79, 118-122, and 250-253; these read GFPSVGKS, DLPGI, and NKID. In terms of domain architecture, TGS spans 292-368; that stretch reads NLVRIYTKPK…EDEDVVTILK (77 aa).

It belongs to the TRAFAC class OBG-HflX-like GTPase superfamily. OBG GTPase family. In terms of assembly, associates with translating polyribosomes. Interacts with GIR2, TMA46, YAP1 and YGR250C.

The protein localises to the cytoplasm. Functionally, involved in ribosomal function. The sequence is that of Ribosome-interacting GTPase 1 (RBG1) from Saccharomyces cerevisiae (strain ATCC 204508 / S288c) (Baker's yeast).